The chain runs to 509 residues: L-arabinose isomerase (509 aa).

Mn(2+) is bound by residues E313, E340, H357, and H456.

This sequence belongs to the arabinose isomerase family. Mn(2+) is required as a cofactor.

The enzyme catalyses beta-L-arabinopyranose = L-ribulose. The protein operates within carbohydrate degradation; L-arabinose degradation via L-ribulose; D-xylulose 5-phosphate from L-arabinose (bacterial route): step 1/3. Its function is as follows. Catalyzes the conversion of L-arabinose to L-ribulose. In Bacteroides thetaiotaomicron (strain ATCC 29148 / DSM 2079 / JCM 5827 / CCUG 10774 / NCTC 10582 / VPI-5482 / E50), this protein is L-arabinose isomerase.